We begin with the raw amino-acid sequence, 289 residues long: uncharacterized protein (289 aa).

A compositionally biased stretch (polar residues) spans 80–96; the sequence is PLNESRTSFKNIPQSRN. Disordered regions lie at residues 80-101 and 136-157; these read PLNE…PRDY and PREN…RMRE.

This is an uncharacterized protein from Acanthamoeba polyphaga (Amoeba).